The sequence spans 268 residues: Testis-specific serine/threonine-protein kinase 3 (268 aa).

The Protein kinase domain occupies 10–265 (YQLGKTIGEG…IEEVSWHPWL (256 aa)). ATP contacts are provided by residues 16–24 (IGEGTYSKV) and Lys-39. Asp-134 (proton acceptor) is an active-site residue. At Ser-166 the chain carries Phosphoserine; by autocatalysis. Thr-168 carries the phosphothreonine; by PDPK1 modification.

The protein belongs to the protein kinase superfamily. CAMK Ser/Thr protein kinase family. The cofactor is Mg(2+). Requires Mn(2+) as cofactor. In terms of processing, autophosphorylated at Ser-166. Phosphorylation at Thr-168 by PDPK1 activates the serine/threonine protein kinase activity. In terms of tissue distribution, developmentally expressed in testicular germ cells. In adult testis, expression was detected in round and condensing spermatids, but not in meiotic pachytene spermatocytes. Not expressed in brain, ovary, kidney, liver or early embryonic cells.

The protein resides in the cell projection. The protein localises to the cilium. It localises to the flagellum. It catalyses the reaction L-seryl-[protein] + ATP = O-phospho-L-seryl-[protein] + ADP + H(+). The enzyme catalyses L-threonyl-[protein] + ATP = O-phospho-L-threonyl-[protein] + ADP + H(+). With respect to regulation, activated by phosphorylation on Thr-168 by PDPK1. Its function is as follows. Serine/threonine protein kinase required for spermatid development and male fertility. The polypeptide is Testis-specific serine/threonine-protein kinase 3 (Mus musculus (Mouse)).